The following is a 352-amino-acid chain: Neutral protease 2 (352 aa).

A signal peptide spans 1–19; that stretch reads MRVTTLSTALFALASTAVS. Positions 20 to 175 are excised as a propeptide; that stretch reads APTAGSSSPG…TKALSQLTRR (156 aa). 3 disulfide bridges follow: cysteine 181–cysteine 253, cysteine 260–cysteine 278, and cysteine 292–cysteine 352. Residue histidine 303 participates in Zn(2+) binding. The active site involves glutamate 304. Zn(2+) is bound by residues histidine 307 and aspartate 318.

Belongs to the peptidase M35 family. The cofactor is Zn(2+).

The catalysed reaction is Preferential cleavage of bonds with hydrophobic residues in P1'. Also 3-Asn-|-Gln-4 and 8-Gly-|-Ser-9 bonds in insulin B chain.. Its function is as follows. Metalloprotease that shows high activities on basic nuclear substrates such as histone and protamine. This is Neutral protease 2 from Aspergillus oryzae (strain ATCC 42149 / RIB 40) (Yellow koji mold).